We begin with the raw amino-acid sequence, 130 residues long: Small ribosomal subunit protein uS8 (130 aa).

It belongs to the universal ribosomal protein uS8 family. Part of the 30S ribosomal subunit.

In terms of biological role, one of the primary rRNA binding proteins, it binds directly to 16S rRNA central domain where it helps coordinate assembly of the platform of the 30S subunit. The sequence is that of Small ribosomal subunit protein uS8 from Pyrobaculum arsenaticum (strain DSM 13514 / JCM 11321 / PZ6).